We begin with the raw amino-acid sequence, 89 residues long: uncharacterized protein (89 aa).

The protein to Synechocystis PCC 6803 slr1025.

This is an uncharacterized protein from Ureaplasma parvum serovar 3 (strain ATCC 700970).